A 231-amino-acid polypeptide reads, in one-letter code: Large ribosomal subunit protein uL1 (231 aa).

This sequence belongs to the universal ribosomal protein uL1 family. As to quaternary structure, part of the 50S ribosomal subunit.

Binds directly to 23S rRNA. The L1 stalk is quite mobile in the ribosome, and is involved in E site tRNA release. Its function is as follows. Protein L1 is also a translational repressor protein, it controls the translation of the L11 operon by binding to its mRNA. In Cupriavidus pinatubonensis (strain JMP 134 / LMG 1197) (Cupriavidus necator (strain JMP 134)), this protein is Large ribosomal subunit protein uL1.